The chain runs to 348 residues: Dihydroorotase (348 aa).

H17 and H19 together coordinate Zn(2+). Residues 19 to 21 (HLR) and N45 each bind substrate. Residues K103, H140, and H178 each coordinate Zn(2+). An N6-carboxylysine modification is found at K103. H140 is a binding site for substrate. Position 223 (L223) interacts with substrate. Zn(2+) is bound at residue D251. D251 is a catalytic residue. H255 and A267 together coordinate substrate.

It belongs to the metallo-dependent hydrolases superfamily. DHOase family. Class II DHOase subfamily. Homodimer. Zn(2+) serves as cofactor.

The enzyme catalyses (S)-dihydroorotate + H2O = N-carbamoyl-L-aspartate + H(+). Its pathway is pyrimidine metabolism; UMP biosynthesis via de novo pathway; (S)-dihydroorotate from bicarbonate: step 3/3. In terms of biological role, catalyzes the reversible cyclization of carbamoyl aspartate to dihydroorotate. The chain is Dihydroorotase from Cronobacter sakazakii (strain ATCC BAA-894) (Enterobacter sakazakii).